An 818-amino-acid polypeptide reads, in one-letter code: Phenylalanine--tRNA ligase beta subunit (818 aa).

Residues 39 to 148 (AAELQKFEVA…EDAVVGENFT (110 aa)) enclose the tRNA-binding domain. Residues 423 to 498 (SQKKPLDFSA…RIYGYDKIES (76 aa)) enclose the B5 domain. Mg(2+)-binding residues include aspartate 476, aspartate 482, glutamate 485, and glutamate 486. The FDX-ACB domain occupies 724-817 (SDFQANFRDY…ISQKFQGTLR (94 aa)).

It belongs to the phenylalanyl-tRNA synthetase beta subunit family. Type 1 subfamily. In terms of assembly, tetramer of two alpha and two beta subunits. Requires Mg(2+) as cofactor.

It is found in the cytoplasm. The catalysed reaction is tRNA(Phe) + L-phenylalanine + ATP = L-phenylalanyl-tRNA(Phe) + AMP + diphosphate + H(+). The sequence is that of Phenylalanine--tRNA ligase beta subunit from Rickettsia conorii (strain ATCC VR-613 / Malish 7).